Consider the following 58-residue polypeptide: Small ribosomal subunit protein eS27 (58 aa).

Residues Cys-10, Cys-13, Cys-29, and Cys-32 each coordinate Zn(2+). Residues 10-32 (CPDCEHEQVIFDHPSTIVKCIIC) form a C4-type zinc finger.

It belongs to the eukaryotic ribosomal protein eS27 family. As to quaternary structure, part of the 30S ribosomal subunit. The cofactor is Zn(2+).

This Archaeoglobus fulgidus (strain ATCC 49558 / DSM 4304 / JCM 9628 / NBRC 100126 / VC-16) protein is Small ribosomal subunit protein eS27.